The chain runs to 408 residues: Acetate kinase (408 aa).

Asparagine 7 is a Mg(2+) binding site. Lysine 14 lines the ATP pocket. Residue arginine 91 coordinates substrate. Aspartate 148 (proton donor/acceptor) is an active-site residue. ATP is bound by residues 208 to 212, 283 to 285, and 331 to 335; these read HLGNG, DFR, and GIGEN. Glutamate 384 serves as a coordination point for Mg(2+).

Belongs to the acetokinase family. As to quaternary structure, homodimer. Requires Mg(2+) as cofactor. Mn(2+) is required as a cofactor.

Its subcellular location is the cytoplasm. The enzyme catalyses acetate + ATP = acetyl phosphate + ADP. It functions in the pathway metabolic intermediate biosynthesis; acetyl-CoA biosynthesis; acetyl-CoA from acetate: step 1/2. Its function is as follows. Catalyzes the formation of acetyl phosphate from acetate and ATP. Can also catalyze the reverse reaction. The chain is Acetate kinase from Methanosarcina barkeri (strain Fusaro / DSM 804).